The primary structure comprises 477 residues: Glycogen synthase (477 aa).

Lys15 is an ADP-alpha-D-glucose binding site.

Belongs to the glycosyltransferase 1 family. Bacterial/plant glycogen synthase subfamily.

The enzyme catalyses [(1-&gt;4)-alpha-D-glucosyl](n) + ADP-alpha-D-glucose = [(1-&gt;4)-alpha-D-glucosyl](n+1) + ADP + H(+). It participates in glycan biosynthesis; glycogen biosynthesis. In terms of biological role, synthesizes alpha-1,4-glucan chains using ADP-glucose. In Cronobacter sakazakii (strain ATCC BAA-894) (Enterobacter sakazakii), this protein is Glycogen synthase.